The primary structure comprises 156 residues: Small ribosomal subunit protein uS7 (156 aa).

The protein belongs to the universal ribosomal protein uS7 family. As to quaternary structure, part of the 30S ribosomal subunit. Contacts proteins S9 and S11.

Functionally, one of the primary rRNA binding proteins, it binds directly to 16S rRNA where it nucleates assembly of the head domain of the 30S subunit. Is located at the subunit interface close to the decoding center, probably blocks exit of the E-site tRNA. This chain is Small ribosomal subunit protein uS7, found in Limosilactobacillus fermentum (strain NBRC 3956 / LMG 18251) (Lactobacillus fermentum).